Consider the following 192-residue polypeptide: ADP-ribosylation factor-like protein 14 (192 aa).

The N-myristoyl glycine moiety is linked to residue Gly-2. Residues 20–27 (GLDSAGKS), 64–68 (DVGGQ), and 123–126 (NKQD) contribute to the GTP site.

It belongs to the small GTPase superfamily. Arf family. In terms of assembly, interacts with ARL14EP. In terms of tissue distribution, expressed in immature dendritic cells.

The protein resides in the cytoplasmic vesicle. In terms of biological role, GTPase that recruits MYO1E to MHC class II-containing vesicles via the effector protein ARL14EP and hence controls the movement of these vesicles along the actin cytoskeleton in dendritic cells. The protein is ADP-ribosylation factor-like protein 14 (ARL14) of Homo sapiens (Human).